A 336-amino-acid polypeptide reads, in one-letter code: Malate dehydrogenase, cytoplasmic (336 aa).

Residues 11 to 17 and Asp-42 contribute to the NAD(+) site; that span reads GAAGQIG. Substrate is bound by residues Arg-92 and Arg-98. Residues Asn-105, Gln-112, and 129 to 131 each bind NAD(+); that span reads VGN. Substrate contacts are provided by Asn-131 and Arg-163. The Proton acceptor role is filled by His-188.

The protein belongs to the LDH/MDH superfamily. MDH type 2 family. Homodimer.

The protein resides in the cytoplasm. It carries out the reaction (S)-malate + NAD(+) = oxaloacetate + NADH + H(+). In terms of biological role, catalyzes the reversible conversion of (S)-malate to oxaloacetate in the cytoplasm where oxaloacetate is used for gluconeogenesis. This Caenorhabditis elegans protein is Malate dehydrogenase, cytoplasmic.